Consider the following 185-residue polypeptide: Alkyl hydroperoxide reductase AhpD (185 aa).

Cysteine 131 acts as the Proton donor in catalysis. The cysteines at positions 131 and 134 are disulfide-linked. Catalysis depends on cysteine 134, which acts as the Cysteine sulfenic acid (-SOH) intermediate.

Belongs to the AhpD family. In terms of assembly, homotrimer.

It carries out the reaction N(6)-[(R)-dihydrolipoyl]-L-lysyl-[lipoyl-carrier protein] + a hydroperoxide = N(6)-[(R)-lipoyl]-L-lysyl-[lipoyl-carrier protein] + an alcohol + H2O. Antioxidant protein with alkyl hydroperoxidase activity. Required for the reduction of the AhpC active site cysteine residues and for the regeneration of the AhpC enzyme activity. This is Alkyl hydroperoxide reductase AhpD from Frankia alni (strain DSM 45986 / CECT 9034 / ACN14a).